The following is a 512-amino-acid chain: Cytochrome P450 98A1 (512 aa).

Residues 3–23 (ASLLLSVALAVVLIPLSLALL) form a helical membrane-spanning segment. Cys-441 contacts heme.

Belongs to the cytochrome P450 family. Requires heme as cofactor.

The protein resides in the membrane. In Sorghum bicolor (Sorghum), this protein is Cytochrome P450 98A1 (CYP98A1).